The primary structure comprises 169 residues: Disulfide bond formation protein B (169 aa).

The Cytoplasmic segment spans residues 1-13; sequence MQSLISFAHSRLS. The chain crosses the membrane as a helical span at residues 14-30; the sequence is WGILALSALALESAALY. The Periplasmic portion of the chain corresponds to 31 to 48; it reads FQHIMKLDPCVMCIYQRV. Cys-40 and Cys-43 are joined by a disulfide. The chain crosses the membrane as a helical span at residues 49-64; it reads AVFGLLGAGLFGFMAP. Residues 65–71 are Cytoplasmic-facing; sequence ANRVIRA. The helical transmembrane segment at 72–89 threads the bilayer; it reads LGALLWGISAAWGLKLAL. At 90-144 the chain is on the periplasmic side; sequence ELVDMQNNPNPFSTCSFLPEFPSWLQLHEWLPSVFMPTGMCTDIPWEFAGVTMGE. Cysteines 104 and 130 form a disulfide. Residues 145-163 form a helical membrane-spanning segment; that stretch reads WMIVAFSVYLLAWLAFIVP. The Cytoplasmic portion of the chain corresponds to 164-169; that stretch reads MLKKSA.

This sequence belongs to the DsbB family.

The protein localises to the cell inner membrane. Functionally, required for disulfide bond formation in some periplasmic proteins. Acts by oxidizing the DsbA protein. The chain is Disulfide bond formation protein B from Shewanella amazonensis (strain ATCC BAA-1098 / SB2B).